Reading from the N-terminus, the 170-residue chain is Cathelicidin antimicrobial peptide (170 aa).

An N-terminal signal peptide occupies residues 1 to 30 (MKTQRHGPSLGRWSLVLLLLGLVMPLAIVA). Residues 31-131 (QVLSYQEAVL…DISCDKDNRR (101 aa)) constitute a propeptide, cathelin-like domain (CLD). 2 disulfide bridges follow: cysteine 86-cysteine 97 and cysteine 108-cysteine 125. The segment at 150 to 162 (LKKIGQKIKDFLG) is active core.

This sequence belongs to the cathelicidin family. In terms of assembly, monomer, homodimer or homotrimer (in vitro). Oligomerizes as tetra- or hexamer in solution (in vitro). Post-translationally, proteolytically cleaved by proteinase PRTN3 into antibacterial peptide LL-37. Proteolytically cleaved by cathepsin CTSG and neutrophil elastase ELANE. In terms of processing, resistant to proteolytic degradation in solution, and when bound to both zwitterionic (mimicking mammalian membranes) and negatively charged membranes (mimicking bacterial membranes). After secretion onto the skin surface, the CAMP gene product is processed by a serine protease-dependent mechanism into multiple novel antimicrobial peptides distinct from and shorter than cathelicidin LL-37. These peptides show enhanced antimicrobial action, acquiring the ability to kill skin pathogens such as S.aureus, E.coli and C.albicans. These peptides have lost the ability to stimulate CXCL8/IL8 release from keratinocytes. The peptides act synergistically, killing bacteria at lower concentrations when present together, and maintain activity at increased salt condition.

The protein resides in the secreted. It is found in the vesicle. Its function is as follows. Antimicrobial protein that is an integral component of the innate immune system. Binds to bacterial lipopolysaccharides (LPS). Acts via neutrophil N-formyl peptide receptors to enhance the release of CXCL2. Postsecretory processing generates multiple cathelicidin antimicrobial peptides with various lengths which act as a topical antimicrobial defense in sweat on skin. The unprocessed precursor form, cathelicidin antimicrobial peptide, inhibits the growth of Gram-negative E.coli and E.aerogenes with efficiencies comparable to that of the mature peptide LL-37 (in vitro). Functionally, antimicrobial peptide that is an integral component of the innate immune system. Binds to bacterial lipopolysaccharides (LPS). Causes membrane permeabilization by forming transmembrane pores (in vitro). Causes lysis of E.coli. Exhibits antimicrobial activity against Gram-negative bacteria such as P.aeruginosa, S.typhimurium, E.aerogenes, E.coli and P.syringae, Gram-positive bacteria such as L.monocytogenes, S.epidermidis, S.pyogenes and S.aureus, as well as vancomycin-resistant enterococci (in vitro). Exhibits antimicrobial activity against methicillin-resistant S.aureus, P.mirabilis, and C.albicans in low-salt media, but not in media containing 100 mM NaCl (in vitro). Forms chiral supramolecular assemblies with quinolone signal (PQS) molecules of P.aeruginosa, which may lead to interference of bacterial quorum signaling and perturbance of bacterial biofilm formation. May form supramolecular fiber-like assemblies on bacterial membranes. Induces cytokine and chemokine producation as well as TNF/TNFA and CSF2/GMCSF production in normal human keratinocytes. Exhibits hemolytic activity against red blood cells. In terms of biological role, exhibits antimicrobial activity against E.coli and B.megaterium (in vitro). The sequence is that of Cathelicidin antimicrobial peptide from Trachypithecus obscurus (Dusky leaf-monkey).